Here is a 271-residue protein sequence, read N- to C-terminus: 5-deoxy-glucuronate isomerase (271 aa).

This sequence belongs to the isomerase IolB family.

It catalyses the reaction 5-deoxy-D-glucuronate = 5-dehydro-2-deoxy-D-gluconate. It functions in the pathway polyol metabolism; myo-inositol degradation into acetyl-CoA; acetyl-CoA from myo-inositol: step 4/7. Involved in the isomerization of 5-deoxy-glucuronate (5DG) to 5-dehydro-2-deoxy-D-gluconate (DKG or 2-deoxy-5-keto-D-gluconate). The polypeptide is 5-deoxy-glucuronate isomerase (Shouchella clausii (strain KSM-K16) (Alkalihalobacillus clausii)).